The sequence spans 273 residues: L-cysteine S-thiosulfotransferase subunit SoxA (273 aa).

An N-terminal signal peptide occupies residues 1 to 24; sequence MKKTVTAVALLCALSSTAIAPTFA. A disulfide bond links Cys-74 and Cys-110. Positions 162-273 constitute a Cytochrome c domain; that stretch reads EMYELGKRMF…GVMLTPGIKR (112 aa). Residues Cys-182 and His-186 each coordinate heme. Arg-230 is a substrate binding site. Cys-234 contributes to the heme binding site. Cys-234 serves as the catalytic Cysteine persulfide intermediate.

Belongs to the SoxA family. As to quaternary structure, heterodimer of SoxA and SoxX. Heme serves as cofactor. Post-translationally, cysteine persulfide at Cys-234.

The protein resides in the periplasm. The enzyme catalyses L-cysteinyl-[SoxY protein] + thiosulfate + 2 Fe(III)-[cytochrome c] = S-sulfosulfanyl-L-cysteinyl-[SoxY protein] + 2 Fe(II)-[cytochrome c] + 2 H(+). The catalysed reaction is S-sulfanyl-L-cysteinyl-[SoxY protein] + thiosulfate + 2 Fe(III)-[cytochrome c] = S-(2-sulfodisulfanyl)-L-cysteinyl-[SoxY protein] + 2 Fe(II)-[cytochrome c] + 2 H(+). In terms of biological role, C-type monoheme cytochrome, which is part of the SoxAX cytochrome complex involved in sulfur oxidation. The SoxAX complex catalyzes the formation of a heterodisulfide bond between the conserved cysteine residue on a sulfur carrier SoxYZ complex subunit SoxY and thiosulfate or other inorganic sulfur substrates. This leads to the liberation of two electrons, which may be transferred from the SoxAX complex to another cytochrome c that then channels them into the respiratory electron transport chain. Some electrons may be used for reductive CO(2) fixation. The chain is L-cysteine S-thiosulfotransferase subunit SoxA from Hydrogenophilus thermoluteolus (Pseudomonas hydrogenothermophila).